The sequence spans 296 residues: Transcription factor bHLH99 (296 aa).

In terms of domain architecture, bHLH spans asparagine 99 to leucine 150.

As to quaternary structure, homodimer. In terms of tissue distribution, expressed constitutively in roots, stems, and flowers.

It is found in the nucleus. This is Transcription factor bHLH99 (BHLH99) from Arabidopsis thaliana (Mouse-ear cress).